Reading from the N-terminus, the 158-residue chain is MSNEFTHINADGNAHMVDVTEKAVTEREARAEAFIEMAPATLEMIMSGSHHKGDVFATARIAGIQAAKKTSDLIPLCHPLMLTKVEVELEAQPEHSRVRITSLCKLSGKTGVEMEALTAASVAALTIYDMCKAVQKDMVISQTRLLEKRGGKSGHFKV.

Residues 76-78 and 114-115 each bind substrate; these read LCH and ME. Residue D129 is part of the active site.

Belongs to the MoaC family. As to quaternary structure, homohexamer; trimer of dimers.

The catalysed reaction is (8S)-3',8-cyclo-7,8-dihydroguanosine 5'-triphosphate = cyclic pyranopterin phosphate + diphosphate. Its pathway is cofactor biosynthesis; molybdopterin biosynthesis. In terms of biological role, catalyzes the conversion of (8S)-3',8-cyclo-7,8-dihydroguanosine 5'-triphosphate to cyclic pyranopterin monophosphate (cPMP). The polypeptide is Cyclic pyranopterin monophosphate synthase (Shewanella woodyi (strain ATCC 51908 / MS32)).